Here is a 222-residue protein sequence, read N- to C-terminus: Voltage-dependent calcium channel gamma-1 subunit (222 aa).

At 1–10 (MSQTKMLKVR) the chain is on the cytoplasmic side. Residues 11–29 (VTLFCILAGIVLAMTAVVT) form a helical membrane-spanning segment. At 30 to 108 (DHWAVLSPHM…TQKEYSISAA (79 aa)) the chain is on the extracellular side. N-linked (GlcNAc...) asparagine glycans are attached at residues Asn-43 and Asn-79. An intrachain disulfide couples Cys-57 to Cys-80. A helical transmembrane segment spans residues 109–129 (AIAIFSLGFIILGSLCVLLSL). Topologically, residues 130–134 (GKKRD) are cytoplasmic. A helical membrane pass occupies residues 135–155 (YLLRPASMFYAFAGLCILVSV). Residues 156 to 179 (EVMRQSVKRMIDSEDTVWIEYYYS) are Extracellular-facing. Residues 180–204 (WSFACACAAFILLFLGGLALLLFSL) form a helical membrane-spanning segment. The Cytoplasmic segment spans residues 205–222 (PRMPRNPWESCMDAEPEH).

It belongs to the PMP-22/EMP/MP20 family. CACNG subfamily. In terms of assembly, component of a calcium channel complex consisting of a pore-forming alpha subunit (CACNA1S) and the ancillary subunits CACNB1 or CACNB2, CACNG1 and CACNA2D1. The channel complex contains alpha, beta, gamma and delta subunits in a 1:1:1:1 ratio, i.e. it contains either CACNB1 or CACNB2. In terms of processing, N-glycosylated. Skeletal muscle.

It localises to the cell membrane. The protein localises to the sarcolemma. Regulatory subunit of the voltage-gated calcium channel that gives rise to L-type calcium currents in skeletal muscle. Regulates channel inactivation kinetics. This Homo sapiens (Human) protein is Voltage-dependent calcium channel gamma-1 subunit (CACNG1).